Here is a 203-residue protein sequence, read N- to C-terminus: Small ribosomal subunit protein uS4 (203 aa).

Residues 20 to 44 (LPGLTRKRPKNTNPPGMHGAERKKK) form a disordered region. One can recognise an S4 RNA-binding domain in the interval 92–155 (MRLDCIVFRL…SSRKLVAAYA (64 aa)).

It belongs to the universal ribosomal protein uS4 family. As to quaternary structure, part of the 30S ribosomal subunit. Contacts protein S5. The interaction surface between S4 and S5 is involved in control of translational fidelity.

Functionally, one of the primary rRNA binding proteins, it binds directly to 16S rRNA where it nucleates assembly of the body of the 30S subunit. Its function is as follows. With S5 and S12 plays an important role in translational accuracy. This Synechococcus sp. (strain JA-2-3B'a(2-13)) (Cyanobacteria bacterium Yellowstone B-Prime) protein is Small ribosomal subunit protein uS4.